Here is a 24-residue protein sequence, read N- to C-terminus: General odorant-binding protein (24 aa).

The protein belongs to the PBP/GOBP family. In terms of assembly, homodimer. Antenna.

Functionally, present in the aqueous fluid surrounding olfactory sensory dendrites and are thought to aid in the capture and transport of hydrophobic odorants into and through this fluid. This chain is General odorant-binding protein, found in Antheraea polyphemus (Polyphemus moth).